We begin with the raw amino-acid sequence, 366 residues long: MMLVQLRQVGVIRSPYKNFSKAPHQGRFSKETVEIEIFPEFEDGLKDIETCTHLIVLYWLDRANRDALLVVPPHDSREHGVFATRSPHRPNPIGFAVVELLERDGRVLKVKGLDALDGTPVVDIKPYSSTIDSVGNAKIGWFEEANPQSKLTRLLLRAKEFHGHICPFVALGVRMSVIAMEKLGVEEDAMASVGEDILAIVECNNCLTDGVQVATGCTLGNNSLIYLDLGKNALTIVRRKDWKGVRVYVNAENVRKYFSKEALELFNKVIVRREGSEEDAKRLSEFWEETGWKMLEIPEEEFKVEFVEVQPIERAPIFENKRCEKCGELAMATRVKDGLCLRCAGSYYAVVGRGIVKFDGEMREVV.

The TsaA-like domain occupies 6–136 (LRQVGVIRSP…YSSTIDSVGN (131 aa)). Residues 23-25 (PHQ), 61-62 (DR), Arg85, and 116-119 (LDGT) contribute to the S-adenosyl-L-methionine site.

This sequence belongs to the tRNA methyltransferase O family.

This Archaeoglobus fulgidus (strain ATCC 49558 / DSM 4304 / JCM 9628 / NBRC 100126 / VC-16) protein is Probable S-adenosyl-L-methionine-binding protein AF_0433.